The following is a 225-amino-acid chain: Cell division protein SepF (225 aa).

Positions 21–134 (DEYLDEPEPT…GPLFDEGGPL (114 aa)) are disordered. Composition is skewed to basic and acidic residues over residues 28-54 (EPTR…RDFA), 77-86 (RYESPRHSSR), and 115-127 (TRSD…RGPL).

This sequence belongs to the SepF family. In terms of assembly, homodimer. Interacts with FtsZ.

The protein resides in the cytoplasm. In terms of biological role, cell division protein that is part of the divisome complex and is recruited early to the Z-ring. Probably stimulates Z-ring formation, perhaps through the cross-linking of FtsZ protofilaments. Its function overlaps with FtsA. In Rhodococcus opacus (strain B4), this protein is Cell division protein SepF.